A 222-amino-acid chain; its full sequence is Superoxide dismutase [Mn], mitochondrial (222 aa).

The transit peptide at 1–24 (MLCRAACSTSRKLVPALGSLGSRQ) directs the protein to the mitochondrion. H50 is a Mn(2+) binding site. Y58 is modified (3'-nitrotyrosine). K68 and K75 each carry N6-acetyllysine; alternate. 2 positions are modified to N6-succinyllysine; alternate: K68 and K75. H98 is a Mn(2+) binding site. Position 114 is an N6-acetyllysine (K114). 2 positions are modified to N6-acetyllysine; alternate: K122 and K130. An N6-succinyllysine; alternate mark is found at K122 and K130. 2 residues coordinate Mn(2+): D183 and H187. The residue at position 202 (K202) is an N6-acetyllysine.

It belongs to the iron/manganese superoxide dismutase family. As to quaternary structure, homotetramer. It depends on Mn(2+) as a cofactor. Nitrated under oxidative stress. Nitration coupled with oxidation inhibits the catalytic activity. In terms of processing, acetylation at Lys-122 decreases enzymatic activity. Deacetylated by SIRT3 upon exposure to ionizing radiations or after long fasting. Post-translationally, polyubiquitinated; leading to proteasomal degradation. Deubiquitinated by USP36 which increases protein stability.

Its subcellular location is the mitochondrion matrix. It carries out the reaction 2 superoxide + 2 H(+) = H2O2 + O2. Functionally, destroys superoxide anion radicals which are normally produced within the cells and which are toxic to biological systems. The chain is Superoxide dismutase [Mn], mitochondrial (SOD2) from Equus caballus (Horse).